The sequence spans 216 residues: Vascular endothelial growth factor A (216 aa).

Residues 1–26 form the signal peptide; sequence MNFLLTWIHWGLAALLYLQSAELSKA. 3 disulfides stabilise this stretch: C52–C94, C83–C128, and C87–C130. N101 carries an N-linked (GlcNAc...) asparagine glycan. A compositionally biased stretch (basic and acidic residues) spans 132-141; the sequence is PKKDVKNKQE. Positions 132–167 are disordered; the sequence is PKKDVKNKQEKKSKRGKGKGQKRKRKKGRYKPPSFH. Over residues 142–161 the composition is skewed to basic residues; that stretch reads KKSKRGKGKGQKRKRKKGRY.

Belongs to the PDGF/VEGF growth factor family. In terms of assembly, homodimer; disulfide-linked. Also found as heterodimer with PGF.

Growth factor active in angiogenesis, vasculogenesis and endothelial cell growth. Induces endothelial cell proliferation, promotes cell migration, inhibits apoptosis and induces permeabilization of blood vessels. Binds to the FLT1/VEGFR1 and KDR/VEGFR2 receptors, heparan sulfate and heparin. In Gallus gallus (Chicken), this protein is Vascular endothelial growth factor A (VEGFA).